The following is a 103-amino-acid chain: Small ribosomal subunit protein uS10 (103 aa).

It belongs to the universal ribosomal protein uS10 family. As to quaternary structure, part of the 30S ribosomal subunit.

In terms of biological role, involved in the binding of tRNA to the ribosomes. This Burkholderia mallei (strain NCTC 10247) protein is Small ribosomal subunit protein uS10.